The sequence spans 331 residues: Ketol-acid reductoisomerase (NADP(+)) (331 aa).

One can recognise a KARI N-terminal Rossmann domain in the interval 2–182; it reads ARLYYDADAN…GGTRAGILET (181 aa). NADP(+)-binding positions include 25 to 28, Ser51, Ser53, and 83 to 86; these read YGSQ and DEVQ. The active site involves His108. Residue Gly134 participates in NADP(+) binding. The 146-residue stretch at 183–328 folds into the KARI C-terminal knotted domain; that stretch reads TFREETETDL…KDLRAMFSWT (146 aa). Mg(2+) is bound by residues Asp191, Glu195, Glu227, and Glu231. Ser252 contributes to the substrate binding site.

This sequence belongs to the ketol-acid reductoisomerase family. Mg(2+) serves as cofactor.

It carries out the reaction (2R)-2,3-dihydroxy-3-methylbutanoate + NADP(+) = (2S)-2-acetolactate + NADPH + H(+). It catalyses the reaction (2R,3R)-2,3-dihydroxy-3-methylpentanoate + NADP(+) = (S)-2-ethyl-2-hydroxy-3-oxobutanoate + NADPH + H(+). The protein operates within amino-acid biosynthesis; L-isoleucine biosynthesis; L-isoleucine from 2-oxobutanoate: step 2/4. Its pathway is amino-acid biosynthesis; L-valine biosynthesis; L-valine from pyruvate: step 2/4. In terms of biological role, involved in the biosynthesis of branched-chain amino acids (BCAA). Catalyzes an alkyl-migration followed by a ketol-acid reduction of (S)-2-acetolactate (S2AL) to yield (R)-2,3-dihydroxy-isovalerate. In the isomerase reaction, S2AL is rearranged via a Mg-dependent methyl migration to produce 3-hydroxy-3-methyl-2-ketobutyrate (HMKB). In the reductase reaction, this 2-ketoacid undergoes a metal-dependent reduction by NADPH to yield (R)-2,3-dihydroxy-isovalerate. This Acaryochloris marina (strain MBIC 11017) protein is Ketol-acid reductoisomerase (NADP(+)).